We begin with the raw amino-acid sequence, 250 residues long: Hydroxyacylglutathione hydrolase (250 aa).

Residues H52, H54, D56, H57, H107, D128, and H166 each coordinate Zn(2+).

Belongs to the metallo-beta-lactamase superfamily. Glyoxalase II family. Monomer. Zn(2+) is required as a cofactor.

It carries out the reaction an S-(2-hydroxyacyl)glutathione + H2O = a 2-hydroxy carboxylate + glutathione + H(+). Its pathway is secondary metabolite metabolism; methylglyoxal degradation; (R)-lactate from methylglyoxal: step 2/2. Thiolesterase that catalyzes the hydrolysis of S-D-lactoyl-glutathione to form glutathione and D-lactic acid. This Neisseria gonorrhoeae (strain NCCP11945) protein is Hydroxyacylglutathione hydrolase.